The sequence spans 294 residues: MTKLKKVMISVIAATLLLLAGCGSSAVIKTDAGSVTQDELYEAMKTTYGNEVVQQLTFKKILEDKYTVTEKEVNAEYKKYEEQYGDSFESTLSSNNLTKTSFKENLEYNLLVQKATEANMDVSESKLKAYYKTWEPDITVRHILVDDEATAKEIQTKLKNGEKFTDLAKEYSTDTATSTNGGLLDPFGPGEMDETFEKAAYALENKDDVSGIVKSTYGYHLIQLVKKTEKGTYAKEKANVKAAYIKSQLTSENMTAALKKELKAANIDIKDSDLKDAFADYTSTSSTSSTTTSN.

The signal sequence occupies residues methionine 1–glycine 21. Residue cysteine 22 is the site of N-palmitoyl cysteine attachment. Cysteine 22 carries the S-diacylglycerol cysteine lipid modification. Residues glutamate 135–lysine 226 enclose the PpiC domain.

This sequence belongs to the PrsA family.

The protein localises to the cell membrane. It catalyses the reaction [protein]-peptidylproline (omega=180) = [protein]-peptidylproline (omega=0). Plays a major role in protein secretion by helping the post-translocational extracellular folding of several secreted proteins. The polypeptide is Foldase protein PrsA 1 (prsA1) (Listeria monocytogenes serovar 1/2a (strain ATCC BAA-679 / EGD-e)).